The chain runs to 364 residues: DNA polymerase IV (364 aa).

A UmuC domain is found at isoleucine 6–glycine 186. Positions 10 and 104 each coordinate Mg(2+). Residue glutamate 105 is part of the active site.

It belongs to the DNA polymerase type-Y family. As to quaternary structure, monomer. It depends on Mg(2+) as a cofactor.

It is found in the cytoplasm. It catalyses the reaction DNA(n) + a 2'-deoxyribonucleoside 5'-triphosphate = DNA(n+1) + diphosphate. Poorly processive, error-prone DNA polymerase involved in untargeted mutagenesis. Copies undamaged DNA at stalled replication forks, which arise in vivo from mismatched or misaligned primer ends. These misaligned primers can be extended by PolIV. Exhibits no 3'-5' exonuclease (proofreading) activity. May be involved in translesional synthesis, in conjunction with the beta clamp from PolIII. The chain is DNA polymerase IV from Bacteroides fragilis (strain YCH46).